We begin with the raw amino-acid sequence, 397 residues long: S-adenosylmethionine synthase (397 aa).

An ATP-binding site is contributed by His-16. Asp-18 lines the Mg(2+) pocket. Glu-44 is a K(+) binding site. Residues Glu-57 and Gln-100 each coordinate L-methionine. Residues 100 to 110 form a flexible loop region; the sequence is QSPDIAQGVNE. ATP contacts are provided by residues 175-177, 242-243, Asp-251, 257-258, Ala-274, and Lys-278; these read DAK, RF, and RK. Residue Asp-251 participates in L-methionine binding. Lys-282 is an L-methionine binding site.

It belongs to the AdoMet synthase family. In terms of assembly, homotetramer; dimer of dimers. The cofactor is Mg(2+). K(+) is required as a cofactor.

The protein localises to the cytoplasm. It catalyses the reaction L-methionine + ATP + H2O = S-adenosyl-L-methionine + phosphate + diphosphate. Its pathway is amino-acid biosynthesis; S-adenosyl-L-methionine biosynthesis; S-adenosyl-L-methionine from L-methionine: step 1/1. In terms of biological role, catalyzes the formation of S-adenosylmethionine (AdoMet) from methionine and ATP. The overall synthetic reaction is composed of two sequential steps, AdoMet formation and the subsequent tripolyphosphate hydrolysis which occurs prior to release of AdoMet from the enzyme. This chain is S-adenosylmethionine synthase, found in Streptococcus thermophilus (strain ATCC BAA-250 / LMG 18311).